The primary structure comprises 389 residues: Protein MEI2-like 7 (389 aa).

Residues 170–184 (RRGMSKVYKPRKPQR) show a composition bias toward basic residues. Positions 170 to 211 (RRGMSKVYKPRKPQRAGRERSPSPSPVFTTRPMSPTPPMQKL) are disordered. The RRM domain maps to 216 to 320 (TTVMVRNIPN…KIIDIRAARI (105 aa)). Positions 351-370 (PRDGSTAGAGAPSPPAVKTV) are disordered.

Probable RNA-binding protein that may play a role in growth regulation. In Oryza sativa subsp. japonica (Rice), this protein is Protein MEI2-like 7 (OML7).